A 397-amino-acid polypeptide reads, in one-letter code: Tryptophan synthase beta chain (397 aa).

Residue lysine 87 is modified to N6-(pyridoxal phosphate)lysine.

The protein belongs to the TrpB family. As to quaternary structure, tetramer of two alpha and two beta chains. Pyridoxal 5'-phosphate serves as cofactor.

The enzyme catalyses (1S,2R)-1-C-(indol-3-yl)glycerol 3-phosphate + L-serine = D-glyceraldehyde 3-phosphate + L-tryptophan + H2O. It functions in the pathway amino-acid biosynthesis; L-tryptophan biosynthesis; L-tryptophan from chorismate: step 5/5. The beta subunit is responsible for the synthesis of L-tryptophan from indole and L-serine. In Escherichia fergusonii (strain ATCC 35469 / DSM 13698 / CCUG 18766 / IAM 14443 / JCM 21226 / LMG 7866 / NBRC 102419 / NCTC 12128 / CDC 0568-73), this protein is Tryptophan synthase beta chain.